The primary structure comprises 1028 residues: Sporulation-specific protein 3 (1028 aa).

It localises to the prospore membrane. In terms of biological role, has a role in spore morphogenesis. Involved in the assembly of the forespore membrane. The sequence is that of Sporulation-specific protein 3 (spo3) from Schizosaccharomyces pombe (strain 972 / ATCC 24843) (Fission yeast).